Reading from the N-terminus, the 207-residue chain is Antitermination protein Q (207 aa).

The tract at residues 1–28 (MRLESVAKFHSPKSPMMSDSPRATASDS) is disordered. Residues Cys-118, Cys-121, Cys-144, and Cys-147 each contribute to the Zn(2+) site. The segment at 118–147 (CRNCHGTGRAVDIAKTEQWGRVVEKECGRC) is a zinc-finger region. A DNA-binding region spans residues 171–192 (LTQPTWSRTVKPLYDALVVQCH).

This sequence belongs to the phage antitermination Q type 2 family. In terms of assembly, interacts with host RPOB (via flap domain); this interaction renders host RNAP resistant to transcription pausing and allows it to read through termination signals. Interacts with host RNA polymerase sigma factor RPOD (via domain-4). Interacts with host NusA (via N-terminus and AR2 domain); this interaction releases the autoinhibition of NusA.

Functionally, mediates the switch from middle to viral late gene expression by associating with host RNA polymerase (RNAP) so that the latter can read without pausing and through transcription terminators preceding late genes. Competes with host factor sigma 70 for binding to RPOB, the beta-subunit of host RNAP. To join the elongation complex, binds a specific DNA Q-binding element (QBE) and interacts with RNAP that is paused during early elongation. Participates in the lysis-lysogeny decision by activating the expression of the late lytic genes. In Salmonella typhimurium, this protein is Antitermination protein Q (23).